Reading from the N-terminus, the 801-residue chain is Cadherin-20 (801 aa).

The signal sequence occupies residues 1 to 34; the sequence is MWTSGRMSNAKNWLGLGMSLYFWGLMDLTTTVLS. A propeptide spanning residues 35-59 is cleaved from the precursor; sequence DTPTPQGELEALLSDKPQSHQRTKR. Residues 60–619 are Extracellular-facing; sequence SWVWNQFFVL…AYMLPVSLSR (560 aa). Cadherin domains lie at 61-165, 166-274, 275-389, 390-494, and 494-610; these read WVWN…EPKF, LDGP…PPRF, PQKH…PPVF, EPGF…APEF, and FPRF…SPEA. N-linked (GlcNAc...) asparagine glycosylation occurs at asparagine 261. N-linked (GlcNAc...) asparagine glycosylation is found at asparagine 420, asparagine 461, and asparagine 542. Residues 620 to 640 traverse the membrane as a helical segment; that stretch reads GALIAILACIFVLLVLVLLIL. Topologically, residues 641 to 801 are cytoplasmic; sequence SMRRHRKQPY…GASEGPAPLW (161 aa).

In terms of tissue distribution, expressed in placenta, adult brain, and fetal brain.

The protein resides in the cell membrane. Cadherins are calcium-dependent cell adhesion proteins. They preferentially interact with themselves in a homophilic manner in connecting cells; cadherins may thus contribute to the sorting of heterogeneous cell types. This chain is Cadherin-20 (CDH20), found in Homo sapiens (Human).